A 375-amino-acid chain; its full sequence is cAMP-dependent protein kinase regulatory subunit (375 aa).

Residues 28–142 (RFCADYFNER…SLYKSVSHNF (115 aa)) form a dimerization and phosphorylation region. The span at 41-50 (REEADDDGPR) shows a compositional bias: basic and acidic residues. Positions 41–102 (REEADDDGPR…EPAAPFTRRT (62 aa)) are disordered. Positions 64–82 (GSSSRSTDGSLFRSSFADT) are enriched in polar residues. Residues 83-97 (SSEGPGSASSEPAAP) are compositionally biased toward low complexity. Serine 103 bears the Phosphoserine mark. 3',5'-cyclic AMP is bound by residues 143-258 (LFGN…FLKE), glutamate 208, arginine 217, 261-375 (ILSD…DPTK), glutamate 328, and arginine 337.

This sequence belongs to the cAMP-dependent kinase regulatory chain family. Tetramer, composed of 2 regulatory (R) and 2 catalytic (C) subunits. In the presence of cAMP it dissociates into 2 active monomeric C subunits and an R dimer.

The protein is cAMP-dependent protein kinase regulatory subunit (PKAR) of Yarrowia lipolytica (strain CLIB 122 / E 150) (Yeast).